We begin with the raw amino-acid sequence, 446 residues long: Sorting nexin-30 (446 aa).

A compositionally biased stretch (polar residues) spans 1 to 18 (MSGSSTPKSLPTSGQQSL). The disordered stretch occupies residues 1 to 84 (MSGSSTPKSL…SSPASSSSLL (84 aa)). The segment covering 70 to 84 (TPADTSSPASSSSLL) has biased composition (low complexity). The PX domain occupies 98-219 (RDLFVTVDDP…VFLTAKDLNS (122 aa)). Arg-141, Gln-143, Lys-171, and Arg-185 together coordinate a 1,2-diacyl-sn-glycero-3-phospho-(1D-myo-inositol-3-phosphate). The region spanning 243 to 446 (KLRNRPVEFA…PLLQDKQEPK (204 aa)) is the BAR domain.

Belongs to the sorting nexin family.

The protein localises to the early endosome membrane. Its function is as follows. Involved in the regulation of endocytosis and in several stages of intracellular trafficking. Together with snx4, involved in autophagosome assembly. The protein is Sorting nexin-30 (snx30) of Xenopus tropicalis (Western clawed frog).